Reading from the N-terminus, the 501-residue chain is Lysine--tRNA ligase (501 aa).

E402 and E409 together coordinate Mg(2+).

This sequence belongs to the class-II aminoacyl-tRNA synthetase family. As to quaternary structure, homodimer. Mg(2+) is required as a cofactor.

Its subcellular location is the cytoplasm. It catalyses the reaction tRNA(Lys) + L-lysine + ATP = L-lysyl-tRNA(Lys) + AMP + diphosphate. The sequence is that of Lysine--tRNA ligase (lysS) from Helicobacter pylori (strain ATCC 700392 / 26695) (Campylobacter pylori).